Reading from the N-terminus, the 391-residue chain is Processive diacylglycerol beta-glucosyltransferase (391 aa).

Belongs to the glycosyltransferase 28 family. UgtP subfamily.

The protein localises to the cell membrane. The catalysed reaction is a 1,2-diacyl-3-O-(beta-D-glucopyranosyl)-sn-glycerol + UDP-alpha-D-glucose = a 1,2-diacyl-3-O-(beta-D-Glc-(1-&gt;6)-beta-D-Glc)-sn-glycerol + UDP + H(+). It catalyses the reaction a 1,2-diacyl-sn-glycerol + UDP-alpha-D-glucose = a 1,2-diacyl-3-O-(beta-D-glucopyranosyl)-sn-glycerol + UDP + H(+). Its pathway is glycolipid metabolism; diglucosyl-diacylglycerol biosynthesis. Processive glucosyltransferase involved in the biosynthesis of both the bilayer- and non-bilayer-forming membrane glucolipids. Is able to successively transfer two glucosyl residues to diacylglycerol (DAG), thereby catalyzing the formation of beta-monoglucosyl-DAG (3-O-(beta-D-glucopyranosyl)-1,2-diacyl-sn-glycerol) and beta-diglucosyl-DAG (3-O-(beta-D-glucopyranosyl-beta-(1-&gt;6)-D-glucopyranosyl)-1,2-diacyl-sn-glycerol). Beta-diglucosyl-DAG is the predominant glycolipid found in Bacillales and is also used as a membrane anchor for lipoteichoic acid (LTA). This Staphylococcus carnosus (strain TM300) protein is Processive diacylglycerol beta-glucosyltransferase.